The chain runs to 78 residues: ATP synthase subunit a (78 aa).

A helical membrane pass occupies residues L34–L54.

It belongs to the ATPase A chain family. F-type ATPases have 2 components, CF(1) - the catalytic core - and CF(0) - the membrane proton channel. CF(1) has five subunits: alpha(3), beta(3), gamma(1), delta(1), epsilon(1). CF(0) has three main subunits: a, b and c.

Its subcellular location is the mitochondrion inner membrane. Mitochondrial membrane ATP synthase (F(1)F(0) ATP synthase or Complex V) produces ATP from ADP in the presence of a proton gradient across the membrane which is generated by electron transport complexes of the respiratory chain. F-type ATPases consist of two structural domains, F(1) - containing the extramembraneous catalytic core and F(0) - containing the membrane proton channel, linked together by a central stalk and a peripheral stalk. During catalysis, ATP synthesis in the catalytic domain of F(1) is coupled via a rotary mechanism of the central stalk subunits to proton translocation. Key component of the proton channel; it may play a direct role in the translocation of protons across the membrane. The sequence is that of ATP synthase subunit a (atp6) from Aspergillus amstelodami.